The primary structure comprises 440 residues: Tryptophan synthase beta chain 2 (440 aa).

The residue at position 110 (lysine 110) is an N6-(pyridoxal phosphate)lysine.

The protein belongs to the TrpB family. Tetramer of two alpha and two beta chains. The cofactor is pyridoxal 5'-phosphate.

It catalyses the reaction (1S,2R)-1-C-(indol-3-yl)glycerol 3-phosphate + L-serine = D-glyceraldehyde 3-phosphate + L-tryptophan + H2O. It functions in the pathway amino-acid biosynthesis; L-tryptophan biosynthesis; L-tryptophan from chorismate: step 5/5. The beta subunit is responsible for the synthesis of L-tryptophan from indole and L-serine. The protein is Tryptophan synthase beta chain 2 (trpB2) of Pyrococcus abyssi (strain GE5 / Orsay).